Here is a 338-residue protein sequence, read N- to C-terminus: 3-dehydroquinate synthase (338 aa).

It belongs to the archaeal-type DHQ synthase family.

It carries out the reaction 2-amino-2,3,7-trideoxy-D-lyxo-hept-6-ulosonate + NAD(+) + H2O = 3-dehydroquinate + NH4(+) + NADH + H(+). Catalyzes the oxidative deamination and cyclization of 2-amino-3,7-dideoxy-D-threo-hept-6-ulosonic acid (ADH) to yield 3-dehydroquinate (DHQ), which is fed into the canonical shikimic pathway of aromatic amino acid biosynthesis. The polypeptide is 3-dehydroquinate synthase (Cenarchaeum symbiosum (strain A)).